The sequence spans 462 residues: Cysteine desulfurase, mitochondrial (462 aa).

Pyridoxal 5'-phosphate contacts are provided by residues Ala-132–Thr-133, Asn-212, Gln-240, and Ser-260–His-262. Lys-263 carries the post-translational modification N6-(pyridoxal phosphate)lysine. Thr-300 lines the pyridoxal 5'-phosphate pocket. Cys-386 (cysteine persulfide intermediate) is an active-site residue. Cys-386 contacts [2Fe-2S] cluster.

The protein belongs to the class-V pyridoxal-phosphate-dependent aminotransferase family. NifS/IscS subfamily. As to quaternary structure, component of the mitochondrial core iron-sulfur cluster (ISC) assembly complex at least composed of the cystein desulfurase Nfs1, the scaffold protein IscU, the accessory protein bcn92/Isd11/Lyrm4, and probably fh/frataxin. Interacts with bcn92/Isd11/Lyrm4 and IscU. The cofactor is pyridoxal 5'-phosphate. In terms of tissue distribution, ubiquitous expression at high levels in any life stage.

The protein resides in the mitochondrion. Its subcellular location is the nucleus. It carries out the reaction (sulfur carrier)-H + L-cysteine = (sulfur carrier)-SH + L-alanine. Active when in complex with bcn92/Isd11/Lyrm4. L-cysteine binding kinetics are reduced in the presence of bcn92/Isd11/Lyrm4 and IscU. Activity is regulated by other components of the mitochondrial core iron-sulfur cluster (ISC) complex; Activity is reduced in the presence of IscU but enhanced when both IscU and fh/frataxin are present. Catalyzes the removal of elemental sulfur from cysteine to produce alanine. It supplies the inorganic sulfur for iron-sulfur (Fe-S) clusters. This is Cysteine desulfurase, mitochondrial from Drosophila melanogaster (Fruit fly).